A 450-amino-acid polypeptide reads, in one-letter code: Tubulin beta-1 chain (450 aa).

Gln-11, Glu-69, Ser-138, Gly-142, Thr-143, Gly-144, Asn-204, and Asn-226 together coordinate GTP. Glu-69 serves as a coordination point for Mg(2+). The disordered stretch occupies residues 426–450; it reads QDATADEDEYGEEEGDEEEYGQHDI. Positions 429-444 are enriched in acidic residues; it reads TADEDEYGEEEGDEEE.

This sequence belongs to the tubulin family. Dimer of alpha and beta chains. A typical microtubule is a hollow water-filled tube with an outer diameter of 25 nm and an inner diameter of 15 nM. Alpha-beta heterodimers associate head-to-tail to form protofilaments running lengthwise along the microtubule wall with the beta-tubulin subunit facing the microtubule plus end conferring a structural polarity. Microtubules usually have 13 protofilaments but different protofilament numbers can be found in some organisms and specialized cells. Mg(2+) serves as cofactor.

Its subcellular location is the cytoplasm. The protein localises to the cytoskeleton. Tubulin is the major constituent of microtubules, a cylinder consisting of laterally associated linear protofilaments composed of alpha- and beta-tubulin heterodimers. Microtubules grow by the addition of GTP-tubulin dimers to the microtubule end, where a stabilizing cap forms. Below the cap, tubulin dimers are in GDP-bound state, owing to GTPase activity of alpha-tubulin. The protein is Tubulin beta-1 chain (TUBB1) of Pisum sativum (Garden pea).